Reading from the N-terminus, the 524-residue chain is Hydroxysteroid dehydrogenase-like protein 2 (524 aa).

Residues 17 to 23 (GASRGIG), lysine 42, and aspartate 74 each bind NADP(+). N6-(2-hydroxyisobutyryl)lysine is present on lysine 42. The residue at position 116 (lysine 116) is an N6-acetyllysine. Residue tyrosine 168 is the Proton acceptor of the active site. NADP(+) is bound at residue lysine 172. Basic and acidic residues predominate over residues 283 to 300 (EEKESYDPVPEVKEEKLQ). A disordered region spans residues 283 to 410 (EEKESYDPVP…PLLQSVLPPK (128 aa)). The segment covering 301-391 (LQEQPQLQEQ…QQQPQQRPQQ (91 aa)) has biased composition (low complexity). The SCP2 domain maps to 414–521 (GAVEETFRIV…KLEKLMTHMN (108 aa)). Residue lysine 424 is modified to N6-succinyllysine.

Belongs to the short-chain dehydrogenases/reductases (SDR) family.

It is found in the peroxisome. Its subcellular location is the mitochondrion. Has apparently no steroid dehydrogenase activity. Controls bile acid (BA) and lipid metabolism in response to nutritional cues. The chain is Hydroxysteroid dehydrogenase-like protein 2 (Hsdl2) from Rattus norvegicus (Rat).